We begin with the raw amino-acid sequence, 187 residues long: UPF0301 protein Sputcn32_2681 (187 aa).

It belongs to the UPF0301 (AlgH) family.

This Shewanella putrefaciens (strain CN-32 / ATCC BAA-453) protein is UPF0301 protein Sputcn32_2681.